The following is a 352-amino-acid chain: Histidine biosynthesis bifunctional protein HisB (352 aa).

Residues 1–164 (MSQKILFIDR…EIENEILSSF (164 aa)) form a histidinol-phosphatase region. Aspartate 9 serves as the catalytic Nucleophile. Aspartate 9 and aspartate 11 together coordinate Mg(2+). Residue aspartate 11 is the Proton donor of the active site. Zn(2+) contacts are provided by cysteine 93, histidine 95, cysteine 101, and cysteine 103. Residue aspartate 130 coordinates Mg(2+). The interval 165–352 (RSASYQRTTK…ENLASSKGVI (188 aa)) is imidazoleglycerol-phosphate dehydratase.

In the N-terminal section; belongs to the histidinol-phosphatase family. It in the C-terminal section; belongs to the imidazoleglycerol-phosphate dehydratase family. Mg(2+) is required as a cofactor. Requires Zn(2+) as cofactor.

Its subcellular location is the cytoplasm. It catalyses the reaction D-erythro-1-(imidazol-4-yl)glycerol 3-phosphate = 3-(imidazol-4-yl)-2-oxopropyl phosphate + H2O. The enzyme catalyses L-histidinol phosphate + H2O = L-histidinol + phosphate. The protein operates within amino-acid biosynthesis; L-histidine biosynthesis; L-histidine from 5-phospho-alpha-D-ribose 1-diphosphate: step 6/9. It functions in the pathway amino-acid biosynthesis; L-histidine biosynthesis; L-histidine from 5-phospho-alpha-D-ribose 1-diphosphate: step 8/9. This Campylobacter jejuni subsp. doylei (strain ATCC BAA-1458 / RM4099 / 269.97) protein is Histidine biosynthesis bifunctional protein HisB.